Here is a 183-residue protein sequence, read N- to C-terminus: uncharacterized protein (183 aa).

In terms of domain architecture, SIS spans 27-170 (MIKLIDSARS…VAEIMMQKHL (144 aa)).

This sequence belongs to the SIS family. PHI subfamily.

This is an uncharacterized protein from Archaeoglobus fulgidus (strain ATCC 49558 / DSM 4304 / JCM 9628 / NBRC 100126 / VC-16).